A 282-amino-acid chain; its full sequence is MKNRVTVPEIIASKGKRKLSELTAYDYPTALWADQSGIDMLLVGDSLAMVVLGHDDTLSVGMTEMLHHTSAVARGAKRALVIGDMPFMSYQVSVEEALYNAGLFLKEAKAQAVKLEGGRRVAPQVKAMVEAGIPVQGHLGLTPQSSAQFGGFKIQGKTAEAAKILIEDAQILAEAGCFSIVLEGIPSNVAAMVTEAIPVPTIGIGAGPDCDGQVLVIHDVLGLYDRFVPKFVKKYAQLGLTIKEALTKYREEVENGTFPGPEHEFGMAELEAKKLSGLEDKK.

Mg(2+)-binding residues include D45 and D84. Residues 45–46 (DS), D84, and K114 each bind 3-methyl-2-oxobutanoate. E116 contacts Mg(2+). The active-site Proton acceptor is the E183.

This sequence belongs to the PanB family. Homodecamer; pentamer of dimers. Mg(2+) is required as a cofactor.

It is found in the cytoplasm. It catalyses the reaction 3-methyl-2-oxobutanoate + (6R)-5,10-methylene-5,6,7,8-tetrahydrofolate + H2O = 2-dehydropantoate + (6S)-5,6,7,8-tetrahydrofolate. Its pathway is cofactor biosynthesis; (R)-pantothenate biosynthesis; (R)-pantoate from 3-methyl-2-oxobutanoate: step 1/2. Functionally, catalyzes the reversible reaction in which hydroxymethyl group from 5,10-methylenetetrahydrofolate is transferred onto alpha-ketoisovalerate to form ketopantoate. This is 3-methyl-2-oxobutanoate hydroxymethyltransferase from Syntrophobacter fumaroxidans (strain DSM 10017 / MPOB).